The primary structure comprises 591 residues: Putative F-box protein At1g32140 (591 aa).

Positions 2–49 (TMMSDLSLDLVEEILCRVPITSLKAVRSSCKLWNVLSKNRILCKTEAR) constitute an F-box domain. Residues 567-581 (AGRKRKEKKTKRKSK) show a composition bias toward basic residues. A disordered region spans residues 567-591 (AGRKRKEKKTKRKSKDKQMKLSNKV).

The sequence is that of Putative F-box protein At1g32140 from Arabidopsis thaliana (Mouse-ear cress).